Consider the following 277-residue polypeptide: Large ribosomal subunit protein uL2 (277 aa).

Disordered regions lie at residues 36–55 (PLPK…RHHG) and 213–277 (WKGI…RKKK).

It belongs to the universal ribosomal protein uL2 family. Part of the 50S ribosomal subunit. Forms a bridge to the 30S subunit in the 70S ribosome.

Functionally, one of the primary rRNA binding proteins. Required for association of the 30S and 50S subunits to form the 70S ribosome, for tRNA binding and peptide bond formation. It has been suggested to have peptidyltransferase activity; this is somewhat controversial. Makes several contacts with the 16S rRNA in the 70S ribosome. The chain is Large ribosomal subunit protein uL2 from Staphylococcus aureus (strain bovine RF122 / ET3-1).